We begin with the raw amino-acid sequence, 501 residues long: 25-hydroxyvitamin D-1 alpha hydroxylase, mitochondrial (501 aa).

Residue Cys448 coordinates heme.

It belongs to the cytochrome P450 family. Heme is required as a cofactor. In terms of tissue distribution, kidney.

Its subcellular location is the mitochondrion membrane. It catalyses the reaction calcidiol + 2 reduced [adrenodoxin] + O2 + 2 H(+) = calcitriol + 2 oxidized [adrenodoxin] + H2O. The enzyme catalyses secalciferol + 2 reduced [adrenodoxin] + O2 + 2 H(+) = calcitetrol + 2 oxidized [adrenodoxin] + H2O. It functions in the pathway hormone biosynthesis; cholecalciferol biosynthesis. Its function is as follows. Catalyzes the conversion of 25-hydroxyvitamin D3 (25(OH)D3) to 1-alpha,25-dihydroxyvitamin D3 (1alpha,25(OH)(2)D3), and of 24,25-dihydroxyvitamin D3 (24,25(OH)(2)D3) to 1-alpha,24,25-trihydroxyvitamin D3 (1alpha,24,25(OH)(3)D3). Is also active with 25-hydroxy-24-oxo-vitamin D3. Plays an important role in normal bone growth, calcium metabolism, and tissue differentiation. The polypeptide is 25-hydroxyvitamin D-1 alpha hydroxylase, mitochondrial (Cyp27b1) (Rattus norvegicus (Rat)).